The following is a 198-amino-acid chain: Nucleoid occlusion factor SlmA (198 aa).

The 62-residue stretch at 9 to 70 (RNRREEILQA…SLIEFIEDSL (62 aa)) folds into the HTH tetR-type domain. The segment at residues 33–52 (TTAKLAANVGVSEAALYRHF) is a DNA-binding region (H-T-H motif). Residues 119–144 (DRLQGRINQLFERIEVQLRQVLREKK) are a coiled coil.

It belongs to the nucleoid occlusion factor SlmA family. In terms of assembly, homodimer. Interacts with FtsZ.

The protein resides in the cytoplasm. It localises to the nucleoid. Required for nucleoid occlusion (NO) phenomenon, which prevents Z-ring formation and cell division over the nucleoid. Acts as a DNA-associated cell division inhibitor that binds simultaneously chromosomal DNA and FtsZ, and disrupts the assembly of FtsZ polymers. SlmA-DNA-binding sequences (SBS) are dispersed on non-Ter regions of the chromosome, preventing FtsZ polymerization at these regions. This chain is Nucleoid occlusion factor SlmA, found in Yersinia enterocolitica serotype O:8 / biotype 1B (strain NCTC 13174 / 8081).